Consider the following 88-residue polypeptide: MSTKNAKPKKEAQRRPSRKAKVKATLGEFDLRDYRNVEVLKRFLSETGKILPRRRTGLSAKEQRILAKTIKRARILGLLPFTEKLVRK.

The tract at residues 1-22 is disordered; the sequence is MSTKNAKPKKEAQRRPSRKAKV.

This sequence belongs to the bacterial ribosomal protein bS18 family. As to quaternary structure, part of the 30S ribosomal subunit. Forms a tight heterodimer with protein bS6.

Functionally, binds as a heterodimer with protein bS6 to the central domain of the 16S rRNA, where it helps stabilize the platform of the 30S subunit. The protein is Small ribosomal subunit protein bS18 (rpsR) of Thermus thermophilus (strain ATCC BAA-163 / DSM 7039 / HB27).